A 447-amino-acid polypeptide reads, in one-letter code: Phosphoglucosamine mutase (447 aa).

Serine 102 acts as the Phosphoserine intermediate in catalysis. Serine 102, aspartate 241, aspartate 243, and aspartate 245 together coordinate Mg(2+). Serine 102 bears the Phosphoserine mark.

Belongs to the phosphohexose mutase family. Mg(2+) serves as cofactor. Activated by phosphorylation.

It catalyses the reaction alpha-D-glucosamine 1-phosphate = D-glucosamine 6-phosphate. Its function is as follows. Catalyzes the conversion of glucosamine-6-phosphate to glucosamine-1-phosphate. The polypeptide is Phosphoglucosamine mutase (Pseudomonas syringae pv. tomato (strain ATCC BAA-871 / DC3000)).